A 180-amino-acid chain; its full sequence is Large ribosomal subunit protein uL5 (180 aa).

This sequence belongs to the universal ribosomal protein uL5 family. In terms of assembly, part of the 50S ribosomal subunit; part of the 5S rRNA/L5/L18/L25 subcomplex. Contacts the 5S rRNA and the P site tRNA. Forms a bridge to the 30S subunit in the 70S ribosome.

Its function is as follows. This is one of the proteins that bind and probably mediate the attachment of the 5S RNA into the large ribosomal subunit, where it forms part of the central protuberance. In the 70S ribosome it contacts protein S13 of the 30S subunit (bridge B1b), connecting the 2 subunits; this bridge is implicated in subunit movement. Contacts the P site tRNA; the 5S rRNA and some of its associated proteins might help stabilize positioning of ribosome-bound tRNAs. This is Large ribosomal subunit protein uL5 from Chlamydia felis (strain Fe/C-56) (Chlamydophila felis).